A 279-amino-acid polypeptide reads, in one-letter code: Energy-coupling factor transporter ATP-binding protein EcfA1 (279 aa).

One can recognise an ABC transporter domain in the interval 5–240; the sequence is IELNNIQFNY…GEALVEMGLD (236 aa). 40–47 is a binding site for ATP; it reads GHNGSGKS.

This sequence belongs to the ABC transporter superfamily. Energy-coupling factor EcfA family. Forms a stable energy-coupling factor (ECF) transporter complex composed of 2 membrane-embedded substrate-binding proteins (S component), 2 ATP-binding proteins (A component) and 2 transmembrane proteins (T component).

It is found in the cell membrane. Its function is as follows. ATP-binding (A) component of a common energy-coupling factor (ECF) ABC-transporter complex. Unlike classic ABC transporters this ECF transporter provides the energy necessary to transport a number of different substrates. The protein is Energy-coupling factor transporter ATP-binding protein EcfA1 of Enterococcus faecalis (strain ATCC 700802 / V583).